Consider the following 448-residue polypeptide: Probable malate:quinone oxidoreductase (448 aa).

It belongs to the MQO family. The cofactor is FAD.

It carries out the reaction (S)-malate + a quinone = a quinol + oxaloacetate. It functions in the pathway carbohydrate metabolism; tricarboxylic acid cycle; oxaloacetate from (S)-malate (quinone route): step 1/1. Its function is as follows. Catalyzes oxidation of malate to oxaloacetate in the citric acid cycle. Donates electrons to quinones of the electron transfer chain. The chain is Probable malate:quinone oxidoreductase (mqo) from Campylobacter jejuni subsp. jejuni serotype O:2 (strain ATCC 700819 / NCTC 11168).